A 254-amino-acid polypeptide reads, in one-letter code: 5-oxoprolinase subunit A (254 aa).

It belongs to the LamB/PxpA family. Forms a complex composed of PxpA, PxpB and PxpC.

It carries out the reaction 5-oxo-L-proline + ATP + 2 H2O = L-glutamate + ADP + phosphate + H(+). In terms of biological role, catalyzes the cleavage of 5-oxoproline to form L-glutamate coupled to the hydrolysis of ATP to ADP and inorganic phosphate. The polypeptide is 5-oxoprolinase subunit A (Acinetobacter baumannii (strain ACICU)).